Here is a 78-residue protein sequence, read N- to C-terminus: Small ribosomal subunit protein bS16 (78 aa).

Belongs to the bacterial ribosomal protein bS16 family.

This chain is Small ribosomal subunit protein bS16, found in Thermodesulfovibrio yellowstonii (strain ATCC 51303 / DSM 11347 / YP87).